The primary structure comprises 1383 residues: WD repeat-containing protein dyf-2 (1383 aa).

WD repeat units lie at residues Glu-32–Leu-71, Asn-72–Val-112, Ser-118–Val-157, Lys-160–Thr-198, and Glu-337–Ser-376. TPR repeat units lie at residues Glu-756–Leu-789, Pro-810–Asn-847, Arg-885–Ala-918, Pro-940–Val-973, Ile-996–Phe-1029, Leu-1031–Gln-1053, and Val-1064–Val-1097.

As to quaternary structure, component of the IFT complex A (IFT-A) composed of at least che-11, daf-10, dyf-2, ift-139, ift-43 and ifta-1. As to expression, expressed in ciliated sensory neurons.

The protein resides in the cell projection. It is found in the cilium. Component of the IFT complex A (IFT-A), a complex required for retrograde ciliary transport. Moves along the ciliary axoneme and is involved in the assembly, localization and the movement of other intraflagellar transport (IFT) proteins along the cilia axoneme. May also associate with the BBSome complex in order to mediate ciliary transport. Regulates cilia biogenesis, morphology and sensitivity to environmental cues. This chain is WD repeat-containing protein dyf-2, found in Caenorhabditis elegans.